The sequence spans 325 residues: NAD kinase (325 aa).

The active-site Proton acceptor is Asp-91. NAD(+)-binding positions include Asp-91 to Gly-92, His-96, Asn-165 to Asp-166, His-176, His-193, Asp-195, and Thr-206 to Ser-211.

It belongs to the NAD kinase family. Requires a divalent metal cation as cofactor.

It is found in the cytoplasm. The catalysed reaction is NAD(+) + ATP = ADP + NADP(+) + H(+). Its function is as follows. Involved in the regulation of the intracellular balance of NAD and NADP, and is a key enzyme in the biosynthesis of NADP. Catalyzes specifically the phosphorylation on 2'-hydroxyl of the adenosine moiety of NAD to yield NADP. The sequence is that of NAD kinase from Psychrobacter arcticus (strain DSM 17307 / VKM B-2377 / 273-4).